Here is a 277-residue protein sequence, read N- to C-terminus: Chitosanase (277 aa).

The signal sequence occupies residues 1-35 (MKISMQKADFWKKAAISLLVFTMFFTLMMSETVFA). Glutamate 54 functions as the Proton donor in the catalytic mechanism. Aspartate 70 serves as the catalytic Nucleophile.

It belongs to the glycosyl hydrolase 46 family.

The protein localises to the secreted. It carries out the reaction Endohydrolysis of beta-(1-&gt;4)-linkages between D-glucosamine residues in a partly acetylated chitosan.. Functionally, aids in the defense against invading fungal pathogens by degrading their cell wall chitosan. The polypeptide is Chitosanase (csn) (Bacillus subtilis (strain 168)).